Consider the following 287-residue polypeptide: 4,4'-diapophytoene synthase (287 aa).

(2E,6E)-farnesyl diphosphate-binding positions include 18–21 (HSKS), Y41, and R45. Mg(2+) is bound by residues D48 and D52. Q165 contributes to the (2E,6E)-farnesyl diphosphate binding site. N168 serves as a coordination point for Mg(2+). Position 171 (R171) interacts with (2E,6E)-farnesyl diphosphate. Mg(2+) is bound at residue D172. Y248 lines the (2E,6E)-farnesyl diphosphate pocket.

This sequence belongs to the phytoene/squalene synthase family. CrtM subfamily. Mg(2+) is required as a cofactor.

The catalysed reaction is 2 (2E,6E)-farnesyl diphosphate = 15-cis-4,4'-diapophytoene + 2 diphosphate. The protein operates within carotenoid biosynthesis; staphyloxanthin biosynthesis; staphyloxanthin from farnesyl diphosphate: step 1/5. Involved in the biosynthesis of the yellow-orange carotenoid staphyloxanthin, which plays a role in the virulence via its protective function against oxidative stress. Catalyzes the head-to-head condensation of two molecules of farnesyl diphosphate (FPP) into the colorless C(30) carotenoid 4,4'-diapophytoene (dehydrosqualene). The polypeptide is 4,4'-diapophytoene synthase (Staphylococcus aureus).